We begin with the raw amino-acid sequence, 424 residues long: Phosphomethylpyrimidine synthase (424 aa).

Substrate contacts are provided by residues Met-94, Tyr-123, His-162, 184 to 186 (SRG), 225 to 228 (NGMR), and Glu-264. His-268 lines the Zn(2+) pocket. A substrate-binding site is contributed by Tyr-291. Residue His-332 coordinates Zn(2+). The [4Fe-4S] cluster site is built by Cys-406, Cys-409, and Cys-413.

Belongs to the ThiC family. It depends on [4Fe-4S] cluster as a cofactor.

It catalyses the reaction 5-amino-1-(5-phospho-beta-D-ribosyl)imidazole + S-adenosyl-L-methionine = 4-amino-2-methyl-5-(phosphooxymethyl)pyrimidine + CO + 5'-deoxyadenosine + formate + L-methionine + 3 H(+). Its pathway is cofactor biosynthesis; thiamine diphosphate biosynthesis. Its function is as follows. Catalyzes the synthesis of the hydroxymethylpyrimidine phosphate (HMP-P) moiety of thiamine from aminoimidazole ribotide (AIR) in a radical S-adenosyl-L-methionine (SAM)-dependent reaction. This chain is Phosphomethylpyrimidine synthase, found in Methanoculleus marisnigri (strain ATCC 35101 / DSM 1498 / JR1).